We begin with the raw amino-acid sequence, 475 residues long: Pregnancy-specific glycoprotein 22 (475 aa).

A signal peptide spans 1–35 (MEVSSELLSNGWTSWQRVLLTASLLTCWLLPITAG). 3 consecutive Ig-like V-type domains span residues 44-140 (KLVE…FLQV), 162-260 (PASV…YLQV), and 280-380 (PVPP…QVNV). N103, N110, and N231 each carry an N-linked (GlcNAc...) asparagine glycan. The 85-residue stretch at 387–471 (PVMRVTDSTV…SKTSLPVRLT (85 aa)) folds into the Ig-like C2-type domain. A disulfide bond links C406 and C454.

The protein belongs to the immunoglobulin superfamily. CEA family.

The protein localises to the secreted. In terms of biological role, may have an angiogenic function during early placental development. Binds to cell-surface heparan sulfate proteoglycans (HSPGs), and stimulates secretion of the proangiogenic factors VEGFA and TGFB from uterine dendritic cells and natural killer cells. Also induces endothelial tube formation in vitro. The sequence is that of Pregnancy-specific glycoprotein 22 from Mus musculus (Mouse).